The sequence spans 132 residues: Putative esterase Ta0293 (132 aa).

This sequence belongs to the thioesterase PaaI family.

The polypeptide is Putative esterase Ta0293 (Thermoplasma acidophilum (strain ATCC 25905 / DSM 1728 / JCM 9062 / NBRC 15155 / AMRC-C165)).